A 239-amino-acid chain; its full sequence is 2-C-methyl-D-erythritol 4-phosphate cytidylyltransferase (239 aa).

It belongs to the IspD/TarI cytidylyltransferase family. IspD subfamily.

It carries out the reaction 2-C-methyl-D-erythritol 4-phosphate + CTP + H(+) = 4-CDP-2-C-methyl-D-erythritol + diphosphate. It functions in the pathway isoprenoid biosynthesis; isopentenyl diphosphate biosynthesis via DXP pathway; isopentenyl diphosphate from 1-deoxy-D-xylulose 5-phosphate: step 2/6. In terms of biological role, catalyzes the formation of 4-diphosphocytidyl-2-C-methyl-D-erythritol from CTP and 2-C-methyl-D-erythritol 4-phosphate (MEP). This Ruthia magnifica subsp. Calyptogena magnifica protein is 2-C-methyl-D-erythritol 4-phosphate cytidylyltransferase.